The chain runs to 475 residues: Ankyrin repeat, SAM and basic leucine zipper domain-containing protein 1 (475 aa).

Residues 1–22 are disordered; that stretch reads MAAGALRGLPVAGGGESSESED. Phosphoserine occurs at positions 17, 18, and 20. ANK repeat units follow at residues 45 to 74, 78 to 107, 110 to 144, 148 to 177, 181 to 210, and 214 to 243; these read EKKE…SVDS, YGWT…NASF, DKQT…DPNV, RLMT…EVNT, NGYT…NKML, and DGKM…PLEG. Residues 272–334 enclose the SAM domain; it reads SYTAFGDLEV…KILATLKELQ (63 aa).

Interacts with DDX4, PIWIL1, RANBP9 and TDRD1.

The protein resides in the cytoplasm. Its function is as follows. Plays a central role during spermatogenesis by repressing transposable elements and preventing their mobilization, which is essential for the germline integrity. Acts via the piRNA metabolic process, which mediates the repression of transposable elements during meiosis by forming complexes composed of piRNAs and Piwi proteins and governs the methylation and subsequent repression of transposons. Its association with pi-bodies suggests a participation in the primary piRNAs metabolic process. Required prior to the pachytene stage to facilitate the production of multiple types of piRNAs, including those associated with repeats involved in the regulation of retrotransposons. May act by mediating protein-protein interactions during germ cell maturation. This chain is Ankyrin repeat, SAM and basic leucine zipper domain-containing protein 1 (ASZ1), found in Colobus guereza (Mantled guereza).